Here is a 227-residue protein sequence, read N- to C-terminus: NAD(P)H-hydrate epimerase (227 aa).

The 210-residue stretch at S12–E221 folds into the YjeF N-terminal domain. Residue N59–D63 participates in (6S)-NADPHX binding. K(+) contacts are provided by N60 and D131. (6S)-NADPHX is bound by residues G135 to E141 and D164. T167 serves as a coordination point for K(+).

It belongs to the NnrE/AIBP family. K(+) is required as a cofactor.

It catalyses the reaction (6R)-NADHX = (6S)-NADHX. It carries out the reaction (6R)-NADPHX = (6S)-NADPHX. Its function is as follows. Catalyzes the epimerization of the S- and R-forms of NAD(P)HX, a damaged form of NAD(P)H that is a result of enzymatic or heat-dependent hydration. This is a prerequisite for the S-specific NAD(P)H-hydrate dehydratase to allow the repair of both epimers of NAD(P)HX. In Pirellula staleyi (strain ATCC 27377 / DSM 6068 / ICPB 4128) (Pirella staleyi), this protein is NAD(P)H-hydrate epimerase.